A 571-amino-acid chain; its full sequence is Leucine aminopeptidase A2, chloroplastic (571 aa).

The transit peptide at Met1 to Leu42 directs the protein to the chloroplast. The Mg(2+) site is built by Lys342 and Asp347. The active site involves Lys354. Residues Asp367, Asp427, and Glu429 each coordinate Mg(2+). Arg431 is an active-site residue.

The protein belongs to the peptidase M17 family. Homohexamer (dimer of homotrimers). The cofactor is Mg(2+). Expressed during floral development. Expressed in healthy and senescent leaves, cotyledons (emergence from seed coats), pistils, sepals, petals, stamens, and floral buds (at protein level).

It is found in the plastid. Its subcellular location is the chloroplast. It catalyses the reaction Release of an N-terminal amino acid, Xaa-|-Yaa-, in which Xaa is preferably Leu, but may be other amino acids including Pro although not Arg or Lys, and Yaa may be Pro. Amino acid amides and methyl esters are also readily hydrolyzed, but rates on arylamides are exceedingly low.. The catalysed reaction is Release of N-terminal proline from a peptide.. Its function is as follows. Catalyzes the removal of unsubstituted N-terminal amino acids from various peptides. When associated as homohexamer, catalyzes the proteolyzes of Xaa-Leu dipeptides. Possesses leucine aminopeptidase activity against the model substrate leucine-amido methyl coumarin. Presumably involved in the processing and regular turnover of intracellular proteins. Regulates wound signaling and has a role in insect defense. In terms of biological role, functions as a molecular chaperone to protect proteins from heat-induced damage. This Solanum lycopersicum (Tomato) protein is Leucine aminopeptidase A2, chloroplastic.